Here is a 524-residue protein sequence, read N- to C-terminus: DEAD-box ATP-dependent RNA helicase CshA (524 aa).

The short motif at 1–29 (MKFNELNLSADLLAEIEKAGFVEASPIQE) is the Q motif element. The Helicase ATP-binding domain occupies 32–202 (IPLALEGKDV…VQFMKAPEHV (171 aa)). 45–52 (AQTGTGKT) serves as a coordination point for ATP. Residues 150–153 (DEAD) carry the DEAD box motif. The region spanning 213–373 (LVDQYYIRVK…GLKPASVEES (161 aa)) is the Helicase C-terminal domain. Residues 440 to 524 (EKPLPFKPSG…GFVIRNKGDK (85 aa)) are disordered. Residues 463-498 (RRGDDRRERDRRGNGRRDEFKKGSRGNDRFDKEKRY) show a composition bias toward basic and acidic residues.

This sequence belongs to the DEAD box helicase family. CshA subfamily. As to quaternary structure, oligomerizes, may be a member of the RNA degradosome.

It is found in the cytoplasm. The catalysed reaction is ATP + H2O = ADP + phosphate + H(+). DEAD-box RNA helicase possibly involved in RNA degradation. Unwinds dsRNA in both 5'- and 3'-directions, has RNA-dependent ATPase activity. In Streptococcus pneumoniae serotype 4 (strain ATCC BAA-334 / TIGR4), this protein is DEAD-box ATP-dependent RNA helicase CshA.